The following is a 119-amino-acid chain: Large ribosomal subunit protein bL19 (119 aa).

This sequence belongs to the bacterial ribosomal protein bL19 family.

Its function is as follows. This protein is located at the 30S-50S ribosomal subunit interface and may play a role in the structure and function of the aminoacyl-tRNA binding site. This is Large ribosomal subunit protein bL19 from Pelobacter propionicus (strain DSM 2379 / NBRC 103807 / OttBd1).